The sequence spans 687 residues: Ribonuclease E (687 aa).

The 83-residue stretch at 35 to 117 folds into the S1 motif domain; it reads GDIYLGVVEN…LTGNITLPGR (83 aa). The Mg(2+) site is built by Asp-296 and Asp-339. Residues Cys-397 and Cys-400 each contribute to the Zn(2+) site. Residues 650-687 form a disordered region; it reads PIKLTETMEESEVNAASTANRRRRRRSSASDSDTGEDS. A C4 Arg-rich motif, necessary and sufficient to confer PNPase binding on another protein motif is present at residues 670–678; sequence RRRRRRSSA.

Belongs to the RNase E/G family. In terms of assembly, may form homodimers or higher order multimers. Interacts with polynucleotide phosphorylase (PNPase, pnp) via the C4 Arg-rich motif (residues 670-678). A homotetramer formed by a dimer of dimers. It depends on Mg(2+) as a cofactor. Requires Zn(2+) as cofactor.

The protein localises to the cytoplasm. It carries out the reaction Endonucleolytic cleavage of single-stranded RNA in A- and U-rich regions.. Endoribonuclease that plays a central role in rRNA and tRNA processing and mRNA decay. Has been shown to act on 9S rRNA (the precursor of 5S rRNA). The protein is Ribonuclease E of Nostoc sp. (strain PCC 7120 / SAG 25.82 / UTEX 2576).